Reading from the N-terminus, the 189-residue chain is Peptidyl-tRNA hydrolase (189 aa).

Y14 is a binding site for tRNA. H19 functions as the Proton acceptor in the catalytic mechanism. TRNA is bound by residues F64, N66, and N112.

Belongs to the PTH family. Monomer.

It localises to the cytoplasm. It carries out the reaction an N-acyl-L-alpha-aminoacyl-tRNA + H2O = an N-acyl-L-amino acid + a tRNA + H(+). Its function is as follows. Hydrolyzes ribosome-free peptidyl-tRNAs (with 1 or more amino acids incorporated), which drop off the ribosome during protein synthesis, or as a result of ribosome stalling. Catalyzes the release of premature peptidyl moieties from peptidyl-tRNA molecules trapped in stalled 50S ribosomal subunits, and thus maintains levels of free tRNAs and 50S ribosomes. This Rhizorhabdus wittichii (strain DSM 6014 / CCUG 31198 / JCM 15750 / NBRC 105917 / EY 4224 / RW1) (Sphingomonas wittichii) protein is Peptidyl-tRNA hydrolase.